A 698-amino-acid chain; its full sequence is Iron-sulfur clusters transporter ATM1, mitochondrial (698 aa).

A mitochondrion-targeting transit peptide spans 1 to 23 (MIPQLLQRSSRACPRYNPALYRL). Residues 24-113 (STTSQQRPGL…PKDDWGTKLR (90 aa)) are Mitochondrial matrix-facing. A disordered region spans residues 32 to 63 (GLTQTFWTSAPRREQPRTPTDSKPTTTKPSAV). Low complexity predominate over residues 48-61 (RTPTDSKPTTTKPS). The chain crosses the membrane as a helical span at residues 114 to 135 (VSLAVSLLIGAKVLNVQVPFYF). Residues 114 to 404 (VSLAVSLLIG…LGSVYRELRQ (291 aa)) enclose the ABC transmembrane type-1 domain. At 136-158 (KSIVDSMNIDVAAVGGTATTVAG) the chain is on the mitochondrial intermembrane side. Residues 159-182 (AMILAYGASRIGATVFQELRNAVF) form a helical membrane-spanning segment. Residues 183–231 (ASVAQNAIRKVACNVFDHLLRLDLTFHLSKQTGGLTRALDRGTKGISFI) are Mitochondrial matrix-facing. The chain crosses the membrane as a helical span at residues 232 to 255 (LSSMVFHVLPTALEISMVCGILTY). Asparagine 256 is a topological domain (mitochondrial intermembrane). A helical membrane pass occupies residues 257–277 (YGAKFAALTVLTMVSYTAFTI). At 278–343 (WTTAWRTKFR…NSIKVATSLA (66 aa)) the chain is on the mitochondrial matrix side. Residues 283–287 (RTKFR) and 346–349 (NSGQ) each bind glutathione. A helical transmembrane segment spans residues 344 to 362 (LLNSGQNIIFSSALTGMMY). The Mitochondrial intermembrane segment spans residues 363-377 (LAANGVAEGTLTVGD). The helical transmembrane segment at 378–399 (LVMVNQLVFQLSVPLNFLGSVY) threads the bilayer. Position 396 (glycine 396) interacts with glutathione. Residues 400 to 698 (RELRQSLLDM…EEENDEQKKN (299 aa)) are Mitochondrial matrix-facing. Residues 439–675 (IKFENVNFAY…DGVYAELWSA (237 aa)) enclose the ABC transporter domain. ATP-binding positions include tyrosine 448 and 472–483 (GPSGCGKSTLLR). The tract at residues 679–698 (MFGEDGKEKSEEENDEQKKN) is disordered. A compositionally biased stretch (basic and acidic residues) spans 682–698 (EDGKEKSEEENDEQKKN).

This sequence belongs to the ABC transporter superfamily. ABCB family. Heavy Metal importer (TC 3.A.1.210) subfamily. As to quaternary structure, homodimer.

The protein resides in the mitochondrion inner membrane. Functionally, performs an essential function in the generation of cytoplasmic iron-sulfur proteins by mediating the ATP-dependent export of Fe/S cluster precursors synthesized by NFS1 and other mitochondrial proteins. Hydrolyzes ATP. Binds glutathione and may function by transporting a glutathione-conjugated iron-sulfur compound. In Gibberella zeae (strain ATCC MYA-4620 / CBS 123657 / FGSC 9075 / NRRL 31084 / PH-1) (Wheat head blight fungus), this protein is Iron-sulfur clusters transporter ATM1, mitochondrial.